The chain runs to 44 residues: Cytochrome b559 subunit beta (44 aa).

A helical transmembrane segment spans residues 19-35; it reads WIAVHTLAVPSVFFLGA. Residue histidine 23 coordinates heme.

This sequence belongs to the PsbE/PsbF family. Heterodimer of an alpha subunit and a beta subunit. PSII is composed of 1 copy each of membrane proteins PsbA, PsbB, PsbC, PsbD, PsbE, PsbF, PsbH, PsbI, PsbJ, PsbK, PsbL, PsbM, PsbT, PsbX, PsbY, PsbZ, Psb30/Ycf12, peripheral proteins PsbO, CyanoQ (PsbQ), PsbU, PsbV and a large number of cofactors. It forms dimeric complexes. Heme b serves as cofactor.

The protein localises to the cellular thylakoid membrane. Functionally, this b-type cytochrome is tightly associated with the reaction center of photosystem II (PSII). PSII is a light-driven water:plastoquinone oxidoreductase that uses light energy to abstract electrons from H(2)O, generating O(2) and a proton gradient subsequently used for ATP formation. It consists of a core antenna complex that captures photons, and an electron transfer chain that converts photonic excitation into a charge separation. The sequence is that of Cytochrome b559 subunit beta from Cyanothece sp. (strain PCC 7425 / ATCC 29141).